We begin with the raw amino-acid sequence, 379 residues long: MSKGPGDFKKSWNGFAAQTPQNTPSSDVHLSKAALEKARQTLQSQLEDKSAHDEVSGLLRNNPAMLSMIEGRLSSLVGKSSGYIESLAPAVQNRITALKGLQKDCDAIQYEFRQKMLDLETKYEKKYQPIFSRRAEIIKGVSEPVDDELDHEEEIFQNNLPDPKGIPEFWLTCLHNVFLVGEMITPEDENVLRSLSDIRFTNLSGDVHGYKLEFEFDSNDYFTNKILTKTYYYKDDLSPSGEFLYDHAEGDKINWIKPEKNLTVRVETKKQRNRKTNQTRLVRTTVPNDSFFNFFSPPQLDDDESDDGLDDKTELLELDYQLGEVFKDQIIPLAIDCFLEEGDLSDFNQMDEEDSEDAYTDEEDLSSDDEEILSSEISD.

Residues 1-10 (MSKGPGDFKK) show a composition bias toward basic and acidic residues. Disordered regions lie at residues 1–30 (MSKGPGDFKKSWNGFAAQTPQNTPSSDVHL) and 345–379 (SDFNQMDEEDSEDAYTDEEDLSSDDEEILSSEISD). Polar residues predominate over residues 16–28 (AAQTPQNTPSSDV).

It belongs to the nucleosome assembly protein (NAP) family.

It is found in the nucleus. The polypeptide is Putative nucleosome assembly protein C2D10.11C (Schizosaccharomyces pombe (strain 972 / ATCC 24843) (Fission yeast)).